Here is a 261-residue protein sequence, read N- to C-terminus: Glucosamine-6-phosphate deaminase (261 aa).

The Proton acceptor; for enolization step role is filled by D67. D136 functions as the For ring-opening step in the catalytic mechanism. The Proton acceptor; for ring-opening step role is filled by H138. The active-site For ring-opening step is E143.

It belongs to the glucosamine/galactosamine-6-phosphate isomerase family. NagB subfamily.

It carries out the reaction alpha-D-glucosamine 6-phosphate + H2O = beta-D-fructose 6-phosphate + NH4(+). The protein operates within amino-sugar metabolism; N-acetylneuraminate degradation; D-fructose 6-phosphate from N-acetylneuraminate: step 5/5. Functionally, catalyzes the reversible isomerization-deamination of glucosamine 6-phosphate (GlcN6P) to form fructose 6-phosphate (Fru6P) and ammonium ion. This chain is Glucosamine-6-phosphate deaminase, found in Mycolicibacterium smegmatis (strain ATCC 700084 / mc(2)155) (Mycobacterium smegmatis).